Reading from the N-terminus, the 143-residue chain is MAKKIIGFIKLQIPAGKANPSPPVGPALGQRGLNIMEFCKAFNAQTQALEPGLPTPVVITAFADKSFTFVLKTPPATVLIKKAAKIDKGSSKPHTDKVGKITRAQAEDIAKTKMPDLTAADLDAAVRTIAGSARSMGITVEGV.

The protein belongs to the universal ribosomal protein uL11 family. In terms of assembly, part of the ribosomal stalk of the 50S ribosomal subunit. Interacts with L10 and the large rRNA to form the base of the stalk. L10 forms an elongated spine to which L12 dimers bind in a sequential fashion forming a multimeric L10(L12)X complex. In terms of processing, one or more lysine residues are methylated.

In terms of biological role, forms part of the ribosomal stalk which helps the ribosome interact with GTP-bound translation factors. This chain is Large ribosomal subunit protein uL11, found in Paraburkholderia phytofirmans (strain DSM 17436 / LMG 22146 / PsJN) (Burkholderia phytofirmans).